Reading from the N-terminus, the 339-residue chain is Biotin synthase (339 aa).

Residues 51–278 (TEVELATLLS…KARVRLSAGR (228 aa)) form the Radical SAM core domain. [4Fe-4S] cluster is bound by residues Cys66, Cys70, and Cys73. The [2Fe-2S] cluster site is built by Cys110, Cys141, Cys201, and Arg273.

This sequence belongs to the radical SAM superfamily. Biotin synthase family. As to quaternary structure, homodimer. The cofactor is [4Fe-4S] cluster. [2Fe-2S] cluster serves as cofactor.

It catalyses the reaction (4R,5S)-dethiobiotin + (sulfur carrier)-SH + 2 reduced [2Fe-2S]-[ferredoxin] + 2 S-adenosyl-L-methionine = (sulfur carrier)-H + biotin + 2 5'-deoxyadenosine + 2 L-methionine + 2 oxidized [2Fe-2S]-[ferredoxin]. It functions in the pathway cofactor biosynthesis; biotin biosynthesis; biotin from 7,8-diaminononanoate: step 2/2. Functionally, catalyzes the conversion of dethiobiotin (DTB) to biotin by the insertion of a sulfur atom into dethiobiotin via a radical-based mechanism. This chain is Biotin synthase, found in Janthinobacterium sp. (strain Marseille) (Minibacterium massiliensis).